The sequence spans 248 residues: Granulin (248 aa).

Belongs to the polyhedrin family.

Its function is as follows. Component of the virus occlusion bodies, which are large proteinaceous structures, that protect the virus from the outside environment for extended periods until they are ingested by insect larvae. This chain is Granulin, found in Xestia c-nigrum granulosis virus (XnGV).